Here is a 282-residue protein sequence, read N- to C-terminus: DegV domain-containing protein spr1415 (282 aa).

In terms of domain architecture, DegV spans 3-280 (LAVFTDSSAY…AGSIALGYIP (278 aa)). The hexadecanoate site is built by Thr-61 and Ser-94.

Functionally, may bind long-chain fatty acids, such as palmitate, and may play a role in lipid transport or fatty acid metabolism. In Streptococcus pneumoniae (strain ATCC BAA-255 / R6), this protein is DegV domain-containing protein spr1415.